The primary structure comprises 228 residues: Cytochrome c oxidase subunit 2 (228 aa).

Residues 1 to 26 lie on the Mitochondrial intermembrane side of the membrane; that stretch reads MRTWSNFNLQNSASPLMEQIIFFHDH. A helical transmembrane segment spans residues 27 to 48; the sequence is TLIILIMITILVGYIMINLFFN. The Mitochondrial matrix portion of the chain corresponds to 49-62; sequence KFINRFFLVGQMIE. Residues 63–82 traverse the membrane as a helical segment; the sequence is LIWTVLPAITLIFIALPSLR. Topologically, residues 83-228 are mitochondrial intermembrane; it reads LLYLLDELNN…FINWINNYSY (146 aa). Residues His-161, Cys-196, Glu-198, Cys-200, His-204, and Met-207 each coordinate Cu cation. Glu-198 contacts Mg(2+).

The protein belongs to the cytochrome c oxidase subunit 2 family. In terms of assembly, component of the cytochrome c oxidase (complex IV, CIV), a multisubunit enzyme composed of a catalytic core of 3 subunits and several supernumerary subunits. The complex exists as a monomer or a dimer and forms supercomplexes (SCs) in the inner mitochondrial membrane with ubiquinol-cytochrome c oxidoreductase (cytochrome b-c1 complex, complex III, CIII). It depends on Cu cation as a cofactor.

It is found in the mitochondrion inner membrane. It catalyses the reaction 4 Fe(II)-[cytochrome c] + O2 + 8 H(+)(in) = 4 Fe(III)-[cytochrome c] + 2 H2O + 4 H(+)(out). Functionally, component of the cytochrome c oxidase, the last enzyme in the mitochondrial electron transport chain which drives oxidative phosphorylation. The respiratory chain contains 3 multisubunit complexes succinate dehydrogenase (complex II, CII), ubiquinol-cytochrome c oxidoreductase (cytochrome b-c1 complex, complex III, CIII) and cytochrome c oxidase (complex IV, CIV), that cooperate to transfer electrons derived from NADH and succinate to molecular oxygen, creating an electrochemical gradient over the inner membrane that drives transmembrane transport and the ATP synthase. Cytochrome c oxidase is the component of the respiratory chain that catalyzes the reduction of oxygen to water. Electrons originating from reduced cytochrome c in the intermembrane space (IMS) are transferred via the dinuclear copper A center (CU(A)) of subunit 2 and heme A of subunit 1 to the active site in subunit 1, a binuclear center (BNC) formed by heme A3 and copper B (CU(B)). The BNC reduces molecular oxygen to 2 water molecules using 4 electrons from cytochrome c in the IMS and 4 protons from the mitochondrial matrix. In Galleria mellonella (Greater wax moth), this protein is Cytochrome c oxidase subunit 2 (COII).